The chain runs to 716 residues: Protein Hook homolog 2 (716 aa).

The interval 1 to 161 (MSVDKAELCG…ELMTKDTPDS (161 aa)) is required for localization to the centrosome and induction of aggresome formation. The sufficient for interaction with microtubules stretch occupies residues 1-546 (MSVDKAELCG…LKRKLEDHLQ (546 aa)). A Calponin-homology (CH) domain is found at 6–122 (AELCGSLLTW…KLLQLVLGCA (117 aa)). Residue Ser-163 is modified to Phosphoserine. 2 coiled-coil regions span residues 188–427 (DHLQ…AQLQ) and 455–605 (AELR…VDKA). The required for localization to the centrosome and induction of aggresome formation stretch occupies residues 533-716 (DPTLLKRKLE…ALSLRPTDKH (184 aa)). Residues 582–716 (DSLQKKDADL…ALSLRPTDKH (135 aa)) are sufficient for interaction with CNTRL.

Belongs to the hook family. As to quaternary structure, self-associates. Component of the FTS/Hook/FHIP complex (FHF complex), composed of AKTIP/FTS, FHIP1B, and one or more members of the Hook family of proteins HOOK1, HOOK2, and HOOK3. May interact directly with AKTIP/FTS, HOOK1 and HOOK3. Associates with several subunits of the homotypic vesicular sorting complex (the HOPS complex) including VPS16 and VPS41; these interactions may be indirect. Interacts with CNTRL. Interacts with microtubules. Interacts with ZC3H14. Interacts with LRGUK (via guanylate kinase-like domain). Interacts with CCDC181. Interacts with AP4M1; the interaction is direct, mediates the interaction between FTS-Hook-FHIP (FHF) complex and AP-4 and the perinuclear distribution of AP-4. Expressed in brain, cerebellum, kidney, liver and heart, with highest levels in heart and kidney (at protein level).

It is found in the cytoplasm. The protein localises to the cytoskeleton. Its subcellular location is the microtubule organizing center. It localises to the centrosome. The protein resides in the golgi apparatus. It is found in the trans-Golgi network. Its function is as follows. Component of the FTS/Hook/FHIP complex (FHF complex). The FHF complex may function to promote vesicle trafficking and/or fusion via the homotypic vesicular protein sorting complex (the HOPS complex). Contributes to the establishment and maintenance of centrosome function. May function in the positioning or formation of aggresomes, which are pericentriolar accumulations of misfolded proteins, proteasomes and chaperones. FHF complex promotes the distribution of AP-4 complex to the perinuclear area of the cell. The protein is Protein Hook homolog 2 (Hook2) of Mus musculus (Mouse).